The primary structure comprises 478 residues: Stromelysin-1 (478 aa).

Positions 1-17 are cleaved as a signal peptide; that stretch reads MKTLPTLLLLCVALCSA. Positions 18 to 100 are cleaved as a propeptide — activation peptide; the sequence is YPLDGASRDA…PRCGVPDVGH (83 aa). A Cysteine switch motif is present at residues 91–98; sequence PRCGVPDV. Residue Cys93 coordinates Zn(2+). Ca(2+) contacts are provided by Asp125 and Asp159. His169 and Asp171 together coordinate Zn(2+). Ca(2+) contacts are provided by Asp176, Gly177, Gly179, and Val181. Residue His184 coordinates Zn(2+). Ca(2+) is bound by residues Gly191, Asn193, and Asp195. His197 serves as a coordination point for Zn(2+). 3 residues coordinate Ca(2+): Asp199, Asp200, and Glu202. His219 is a Zn(2+) binding site. Glu220 is a catalytic residue. His223 and His229 together coordinate Zn(2+). Hemopexin repeat units follow at residues 288 to 337, 338 to 384, 386 to 434, and 435 to 478; these read PVMC…WPSL, PSAV…GFPS, IRKI…FPGI, and NPKI…WFQC. A disulfide bridge connects residues Cys291 and Cys478. Asp298 is a Ca(2+) binding site. Asp390 and Asp439 together coordinate Ca(2+).

It belongs to the peptidase M10A family. Requires Ca(2+) as cofactor. The cofactor is Zn(2+).

It is found in the secreted. The protein resides in the extracellular space. The protein localises to the extracellular matrix. It carries out the reaction Preferential cleavage where P1', P2' and P3' are hydrophobic residues.. Metalloproteinase with a rather broad substrate specificity that can degrade fibronectin, laminin, gelatins of type I, III, IV, and V; collagens III, IV, X, and IX, and cartilage proteoglycans. Activates different molecules including growth factors, plasminogen or other matrix metalloproteinases such as MMP9. Once released into the extracellular matrix (ECM), the inactive pro-enzyme is activated by the plasmin cascade signaling pathway. Also acts intracellularly. For example, in dopaminergic neurons, gets activated by the serine protease HTRA2 upon stress and plays a pivotal role in DA neuronal degeneration by mediating microglial activation and alpha-synuclein/SNCA cleavage. In addition, plays a role in immune response and possesses antiviral activity against various viruses. Mechanistically, translocates from the cytoplasm into the cell nucleus upon virus infection to influence NF-kappa-B activities. This is Stromelysin-1 (MMP3) from Oryctolagus cuniculus (Rabbit).